Here is a 57-residue protein sequence, read N- to C-terminus: DELTA-limacoditoxin(2)-Dv11 (57 aa).

The N-terminal stretch at 1-24 (MKFAKTFLLLFVVLLLLSIVMAEP) is a signal peptide.

Belongs to the limacoditoxin-2 (cecropin-like) family. In terms of tissue distribution, expressed by the venom secretory cell of the spine. The spine is a cuticular structure containing a single large nucleated venom-secreting cell at its base. It is an independent unit capable of producing, storing and injecting venom. On the back of D.vulnerans caterpillars, spines are grouped together by 50 to 100 to form scoli, of which there are eight in D.vulnerans.

Its subcellular location is the secreted. Functionally, peptide that induces pain in mammals and has insecticidal, antibacterial and antiparasitic activities. Induces partially reversible paralysis in D.melanogaster when tested at high doses. Shows a moderate antiparasitic activity against the major pathogenic nematode of ruminants (H.contortus, EC(50)=30.5 uM). Has potent or moderate antibacterial activities against A.baumannii (MIC&lt;0.25 ug/mL) and S.aureus (MIC=16 ug/mL). Has no activity on the other bacteria tested, nor on the fungus C.albicans. Strongly induces the increase of intracellular calcium in mice DRG neurons, which is a proxy for neuronal activation that would occur during nociception. This increase is due to influx of extracellular calcium, suggesting that the peptide forms pore or channel in neuronal cell membranes. In addition, intraplantar injection in mice provokes nocifensive behavior, suggesting a pain-inducing activity. The chain is DELTA-limacoditoxin(2)-Dv11 from Doratifera vulnerans (Mottled cup moth).